The following is a 401-amino-acid chain: Phosphoglycerate kinase 3, cytosolic (401 aa).

Residues valine 24, aspartate 25, asparagine 27, arginine 41, serine 63, histidine 64, glycine 66, arginine 67, arginine 122, histidine 154, and arginine 155 each coordinate (2R)-3-phosphoglycerate. Glycine 200 provides a ligand contact to ADP. Glycine 200 contacts CDP. Lysine 202 and lysine 206 together coordinate AMP. Lysine 206 contributes to the ATP binding site. Residue glycine 224 participates in ADP binding. Glycine 224 is a CDP binding site. Glycine 225 and glycine 297 together coordinate AMP. The ATP site is built by glycine 225, glycine 297, and asparagine 321. Residues glycine 322 and phenylalanine 327 each coordinate CDP. Residue phenylalanine 327 participates in ADP binding. Glutamate 328 serves as a coordination point for AMP. Residues glutamate 328, aspartate 359, and serine 360 each contribute to the ATP site. Aspartate 359 lines the Mg(2+) pocket.

Belongs to the phosphoglycerate kinase family. As to quaternary structure, monomer. The cofactor is Mg(2+). Expressed in roots, leaves and inflorescence.

Its subcellular location is the cytoplasm. It carries out the reaction (2R)-3-phosphoglycerate + ATP = (2R)-3-phospho-glyceroyl phosphate + ADP. The protein operates within carbohydrate degradation; glycolysis; pyruvate from D-glyceraldehyde 3-phosphate: step 2/5. In Arabidopsis thaliana (Mouse-ear cress), this protein is Phosphoglycerate kinase 3, cytosolic.